The following is a 742-amino-acid chain: Conidiogenone synthase (742 aa).

The segment at 1-332 is terpene cyclase; the sequence is MGETIADVYA…SLCVPRYFKV (332 aa). Position 97 (Asp97) interacts with Mg(2+). Substrate is bound by residues Asp97, 190–193, Asn234, 238–242, and 328–329; these read RIVD, SWDKE, and RY. The short motif at 97–101 is the DDXXD 1 element; that stretch reads DDETD. The NSE/DTE motif lies at 234–242; the sequence is NDLFSWDKE. Residues 333–742 are prenyltransferase; that stretch reads ERNPYKDHLE…LRAMEEASQK (410 aa). Positions 414, 417, and 446 each coordinate isopentenyl diphosphate. Mg(2+)-binding residues include Asp453 and Asp457. The DDXXD 2 motif lies at 453-457; sequence DDIQD. Arg462 serves as a coordination point for dimethylallyl diphosphate. Arg463 provides a ligand contact to isopentenyl diphosphate. Dimethylallyl diphosphate contacts are provided by Lys539, Thr540, Gln575, Asn582, Lys592, and Lys602. Positions 701–724 are disordered; that stretch reads EAHKSDSAWKVNQRRAWKGSQKNG.

The protein in the N-terminal section; belongs to the terpene synthase family. This sequence in the C-terminal section; belongs to the FPP/GGPP synthase family. In terms of assembly, hexamer. Requires Mg(2+) as cofactor.

It catalyses the reaction isopentenyl diphosphate + (2E,6E)-farnesyl diphosphate = (2E,6E,10E)-geranylgeranyl diphosphate + diphosphate. It participates in secondary metabolite biosynthesis; terpenoid biosynthesis. Functionally, bifunctional terpene synthase; part of the gene cluster that mediates the biosynthesis of conidiogenone, a diterpene known to induce the conidiation. The bifunctional terpene synthase PrDS converts isopentenyl diphosphate (IPP) and dimethylallyl diphosphate (DMAPP) into deoxyconidiogenol. The C-terminal prenyltransferase (PT) domain of PrDS catalyzes formation of GGPP, whereas the N-terminal terpene cyclase (TC) domain catalyzes the cyclization of GGPP into deoxyconidiogenol. The cytochrome P450 monooxygenase PrP450 then catalyzes two rounds of oxidation to furnish conidiogenone. The sequence is that of Conidiogenone synthase from Penicillium roqueforti (strain FM164).